The sequence spans 365 residues: Chorismate synthase (365 aa).

NADP(+) is bound at residue R46. Residues 123–125, 241–242, G281, 296–300, and R322 each bind FMN; these read RSS, NG, and KPTPS.

The protein belongs to the chorismate synthase family. As to quaternary structure, homotetramer. FMNH2 is required as a cofactor.

The enzyme catalyses 5-O-(1-carboxyvinyl)-3-phosphoshikimate = chorismate + phosphate. It participates in metabolic intermediate biosynthesis; chorismate biosynthesis; chorismate from D-erythrose 4-phosphate and phosphoenolpyruvate: step 7/7. Catalyzes the anti-1,4-elimination of the C-3 phosphate and the C-6 proR hydrogen from 5-enolpyruvylshikimate-3-phosphate (EPSP) to yield chorismate, which is the branch point compound that serves as the starting substrate for the three terminal pathways of aromatic amino acid biosynthesis. This reaction introduces a second double bond into the aromatic ring system. This chain is Chorismate synthase, found in Helicobacter pylori (strain Shi470).